The primary structure comprises 141 residues: MNRRKSREVAMRLLFQTTLNGENLEEALENLKDVRESEDKEKDYESVDLKDVDIDYVKRIIKGIEKNKEEIDGKIKGNLKNWKIERLSKVDLSILRLCTYELKFEEDIPKRVSVNEAIELAKKYSGEKSATFINGVLGKMI.

Belongs to the NusB family.

In terms of biological role, involved in transcription antitermination. Required for transcription of ribosomal RNA (rRNA) genes. Binds specifically to the boxA antiterminator sequence of the ribosomal RNA (rrn) operons. The sequence is that of Transcription antitermination protein NusB from Clostridium botulinum (strain Loch Maree / Type A3).